Reading from the N-terminus, the 285-residue chain is MFKDFFNRSKKKKYLTVQDSKQNDVPAGIMTKCPKCKKIMYTKELNENLNVCFNCDHHIALTAYKRIEAISDEGSFIEFDRGMTSANPLDFPGYEEKIEKDQQKTGLNEALVSGTAKLDGIQYGVAVMDARFRMGSMGSVVGEKICRIIDYCTEHRLPFILFSASGGARMQEGIISLMQMGKTSVSLKRHSDAGLLYISYITNPTTGGVSASFASVGDINLSEPKALIGFAGRRVIEQTINEKLPDDFQTAEFLLEHGQLDKVIHRKDMRETLSNILKIHQEVSN.

The CoA carboxyltransferase N-terminal domain occupies 29–285 (IMTKCPKCKK…ILKIHQEVSN (257 aa)). Zn(2+) contacts are provided by Cys-33, Cys-36, Cys-52, and Cys-55. Residues 33-55 (CPKCKKIMYTKELNENLNVCFNC) form a C4-type zinc finger.

The protein belongs to the AccD/PCCB family. In terms of assembly, acetyl-CoA carboxylase is a heterohexamer composed of biotin carboxyl carrier protein (AccB), biotin carboxylase (AccC) and two subunits each of ACCase subunit alpha (AccA) and ACCase subunit beta (AccD). Requires Zn(2+) as cofactor.

The protein resides in the cytoplasm. The enzyme catalyses N(6)-carboxybiotinyl-L-lysyl-[protein] + acetyl-CoA = N(6)-biotinyl-L-lysyl-[protein] + malonyl-CoA. It functions in the pathway lipid metabolism; malonyl-CoA biosynthesis; malonyl-CoA from acetyl-CoA: step 1/1. Functionally, component of the acetyl coenzyme A carboxylase (ACC) complex. Biotin carboxylase (BC) catalyzes the carboxylation of biotin on its carrier protein (BCCP) and then the CO(2) group is transferred by the transcarboxylase to acetyl-CoA to form malonyl-CoA. In Staphylococcus epidermidis (strain ATCC 12228 / FDA PCI 1200), this protein is Acetyl-coenzyme A carboxylase carboxyl transferase subunit beta.